The sequence spans 156 residues: Small ribosomal subunit protein uS7 (156 aa).

The protein belongs to the universal ribosomal protein uS7 family. Part of the 30S ribosomal subunit. Contacts proteins S9 and S11.

Its function is as follows. One of the primary rRNA binding proteins, it binds directly to 16S rRNA where it nucleates assembly of the head domain of the 30S subunit. Is located at the subunit interface close to the decoding center, probably blocks exit of the E-site tRNA. This is Small ribosomal subunit protein uS7 from Metamycoplasma arthritidis (strain 158L3-1) (Mycoplasma arthritidis).